We begin with the raw amino-acid sequence, 365 residues long: Guanine nucleotide-binding protein alpha-6 subunit (365 aa).

Residue glycine 2 is the site of N-myristoyl glycine attachment. Positions 42-364 (NRFKILLLGT…NENLRSAGLH (323 aa)) constitute a G-alpha domain. The segment at 45-58 (KILLLGTAESGKST) is G1 motif. Residues 50-57 (GTAESGKS), 187-193 (VHCRIST), 212-216 (DVGGQ), 281-284 (NKYD), and alanine 336 each bind GTP. The Mg(2+) site is built by serine 57 and threonine 193. The G2 motif stretch occupies residues 185 to 193 (DIVHCRIST). The tract at residues 208–217 (FKMVDVGGQR) is G3 motif. The G4 motif stretch occupies residues 277-284 (VLFLNKYD). The G5 motif stretch occupies residues 334–339 (TTATDT).

Belongs to the G-alpha family. In terms of assembly, g proteins are composed of 3 units; alpha, beta and gamma. The alpha chain contains the guanine nucleotide binding site.

Guanine nucleotide-binding proteins (G proteins) are involved as modulators or transducers in various transmembrane signaling systems. This Caenorhabditis briggsae protein is Guanine nucleotide-binding protein alpha-6 subunit (gpa-6).